The sequence spans 479 residues: MVSAPPTLQDQAFRSLVRNEVLTVSDAECLIREFFPPLFKEASTQKKPKTIMILVEHWPYPCLHVGLLIDKPNFQIFQAILDGVDTWLKRKYRPRMGRLKKVDFRDAQHHASLDMQDEREGRDYLVGTLPKKQIVEDHSRTRKERLKLFHDLSFMSSLHEDKHQTLLLEWAKERTSFLHLCCEKLEIGAVEVSKVRNVLKFLQPELIKELKLNTVGNLSKLAKFVPFIRKMRNLQKLMLVRTFGTRTFTQEEKQNISKIISLFCKLSCLRHLTIDDVYFLTDQMKELLRCLEAPLVSLKITLCQLSQSDLESFAQRWNYSQLKHLCLRGVTLTNLDVTPLRDFLKRVAANLQTLDLEDCRMDDSHFRTLLPALIKCTQLTSINLYDNDISEDVLENFLHRTTNLSQLTTEMYPAPSEVYNESNYVIVEIFIQICSELMNKLMEVRQANSVCFGSSSCYDCDNRYLYEDDGDVTLCLCQE.

The LRR 1; degenerate repeat unit spans residues 96-124 (MGRLKKVDFRDAQHHASLDMQDEREGRDY). Residues 179–203 (HLCCEKLEIGAVEVSKVRNVLKFLQ) form an LRR 2; degenerate repeat. The LRR 3; degenerate repeat unit spans residues 204–230 (PELIKELKLNTVGNLSKLAKFVPFIRK). The LRR 4; degenerate repeat unit spans residues 231-265 (MRNLQKLMLVRTFGTRTFTQEEKQNISKIISLFCK). LRR repeat units follow at residues 266–291 (LSCL…LRCL), 292–323 (EAPL…SQLK), 324–347 (HLCL…LKRV), 348–375 (AANL…ALIK), and 376–400 (CTQL…FLHR).

This sequence belongs to the PRAME family. Interacts with UHRF1. Seems to be specific to pluripotent tissues in the early embryo. Not detected in somatic tissues.

Promotes maintenance and self-renewal of pluripotent embryonic stem cells (ESCs), downstream of LIF/STAT3. Maintains the pluripotency state of ESCs by repressing DNA methylation through the regulation of UHRF1 stability. Mediates the proteasomal degradation of UHRF1. Is required for the establishment of the blastocyst. The polypeptide is Preferentially expressed antigen in melanoma-like protein 7 (Mus musculus (Mouse)).